The chain runs to 143 residues: Hemoglobin-1 (143 aa).

The residue at position 2 (Ser2) is an N-acetylserine. The Globin domain maps to Ser2–Met143. Heme b is bound at residue His97.

The protein belongs to the globin family. Monomer.

It is found in the cytoplasm. In terms of biological role, serves to transport hydrogen sulfide to autotrophic bacteria. The chain is Hemoglobin-1 from Phacoides pectinatus (Thick lucine).